A 183-amino-acid chain; its full sequence is Bifunctional protein PyrR (183 aa).

The PRPP-binding signature appears at 102–114; that stretch reads VVLVDDVLFSGRT.

This sequence belongs to the purine/pyrimidine phosphoribosyltransferase family. PyrR subfamily.

The catalysed reaction is UMP + diphosphate = 5-phospho-alpha-D-ribose 1-diphosphate + uracil. In terms of biological role, regulates the transcription of the pyrimidine nucleotide (pyr) operon in response to exogenous pyrimidines. Its function is as follows. Also displays a weak uracil phosphoribosyltransferase activity which is not physiologically significant. This is Bifunctional protein PyrR from Leifsonia xyli subsp. xyli (strain CTCB07).